The following is an 80-amino-acid chain: Histone H1.M6.1 (80 aa).

A disordered region spans residues 1–80; that stretch reads MSDAAVPPKK…KAVKKAPKKK (80 aa). Positions 11 to 80 are enriched in basic residues; the sequence is ASPKKAAAKK…KAVKKAPKKK (70 aa).

It is found in the nucleus. It localises to the chromosome. This Trypanosoma cruzi protein is Histone H1.M6.1.